The following is a 138-amino-acid chain: Large ribosomal subunit protein uL16 (138 aa).

Over residues 1–13 the composition is skewed to basic residues; it reads MLQPARRKYRKEQ. A disordered region spans residues 1–20; it reads MLQPARRKYRKEQKGRNTGV.

The protein belongs to the universal ribosomal protein uL16 family. Part of the 50S ribosomal subunit.

Its function is as follows. Binds 23S rRNA and is also seen to make contacts with the A and possibly P site tRNAs. This is Large ribosomal subunit protein uL16 from Verminephrobacter eiseniae (strain EF01-2).